Here is a 455-residue protein sequence, read N- to C-terminus: Na(+)/H(+) antiporter NhaA (455 aa).

11 helical membrane passes run 31-51 (ASGILLIVSTAAALVWANSPW), 83-103 (GLMSIFFFLVGLEIKREVLIG), 113-133 (FPLIAAVGGTVVPAVIYLLCV), 141-161 (GWGIPMATDIAFALGVLILLG), 170-190 (VFVTALAIVDDIIAVLVIALF), 198-218 (VSLLVALGGVGIAFGFNLLGI), 231-251 (IWAAVLKSGVHATVAGVLLAF), 309-329 (GLQPWVSFLIMPLFAFSNAGV), 345-365 (IGVALGLFLGKPLGIWLFAWL), 383-403 (IFGASWICGIGFTMSLFIASL), and 414-434 (SKIGTLAASLVAGVCGSVVLW).

Belongs to the NhaA Na(+)/H(+) (TC 2.A.33) antiporter family.

It is found in the cell inner membrane. The catalysed reaction is Na(+)(in) + 2 H(+)(out) = Na(+)(out) + 2 H(+)(in). In terms of biological role, na(+)/H(+) antiporter that extrudes sodium in exchange for external protons. In Koribacter versatilis (strain Ellin345), this protein is Na(+)/H(+) antiporter NhaA.